The chain runs to 283 residues: Pantothenate synthetase (283 aa).

26 to 33 lines the ATP pocket; the sequence is MGNLHEGH. His-33 serves as the catalytic Proton donor. Gln-57 is a binding site for (R)-pantoate. Gln-57 lines the beta-alanine pocket. 144–147 is an ATP binding site; that stretch reads GKKD. Gln-150 contacts (R)-pantoate. Residues Val-173 and 181–184 each bind ATP; that span reads LSSR.

The protein belongs to the pantothenate synthetase family. As to quaternary structure, homodimer.

The protein localises to the cytoplasm. It carries out the reaction (R)-pantoate + beta-alanine + ATP = (R)-pantothenate + AMP + diphosphate + H(+). It functions in the pathway cofactor biosynthesis; (R)-pantothenate biosynthesis; (R)-pantothenate from (R)-pantoate and beta-alanine: step 1/1. Its function is as follows. Catalyzes the condensation of pantoate with beta-alanine in an ATP-dependent reaction via a pantoyl-adenylate intermediate. The chain is Pantothenate synthetase from Ralstonia nicotianae (strain ATCC BAA-1114 / GMI1000) (Ralstonia solanacearum).